The sequence spans 377 residues: S-adenosylmethionine decarboxylase proenzyme 2 (377 aa).

Active-site residues include glutamate 24 and glutamate 27. Serine 84 functions as the Schiff-base intermediate with substrate; via pyruvic acid in the catalytic mechanism. Pyruvic acid (Ser); by autocatalysis is present on serine 84. Residue cysteine 98 is the Proton donor; for catalytic activity of the active site. Catalysis depends on proton acceptor; for processing activity residues serine 246 and histidine 259.

The protein belongs to the eukaryotic AdoMetDC family. Requires pyruvate as cofactor. Post-translationally, is synthesized initially as an inactive proenzyme. Formation of the active enzyme involves a self-maturation process in which the active site pyruvoyl group is generated from an internal serine residue via an autocatalytic post-translational modification. Two non-identical subunits are generated from the proenzyme in this reaction, and the pyruvate is formed at the N-terminus of the alpha chain, which is derived from the carboxyl end of the proenzyme. The post-translation cleavage follows an unusual pathway, termed non-hydrolytic serinolysis, in which the side chain hydroxyl group of the serine supplies its oxygen atom to form the C-terminus of the beta chain, while the remainder of the serine residue undergoes an oxidative deamination to produce ammonia and the pyruvoyl group blocking the N-terminus of the alpha chain.

The enzyme catalyses S-adenosyl-L-methionine + H(+) = S-adenosyl 3-(methylsulfanyl)propylamine + CO2. The protein operates within amine and polyamine biosynthesis; S-adenosylmethioninamine biosynthesis; S-adenosylmethioninamine from S-adenosyl-L-methionine: step 1/1. The polypeptide is S-adenosylmethionine decarboxylase proenzyme 2 (SAMDC2) (Dianthus caryophyllus (Carnation)).